The chain runs to 207 residues: MSTMIMDLCSYTRLGLTGYLTSRGIKKQEIVEVNSAADLQKHCTSCCPAVVFLNEDCFVHDDESNGIIRQIITQNPATLFVIFMSLANIHFDRYLRVRKNLLISSKSITPKDLDVILVNYLKYKNTSVGQLTLPTLSLSKTESNMLQMWMAGHGTSQISTQMNIKAKTVSSHKGNIKKKIQTHNKQVIYHIVRLTENITSGIQVNMR.

Residues 131-196 (LTLPTLSLSK…VIYHIVRLTE (66 aa)) form the HTH luxR-type domain. A DNA-binding region (H-T-H motif) is located at residues 155–174 (TSQISTQMNIKAKTVSSHKG).

It belongs to the RcsA family.

In terms of biological role, component of the Rcs signaling system, which controls transcription of numerous genes. Binds to DNA to regulate expression of genes. The chain is Transcriptional regulatory protein RcsA from Klebsiella aerogenes (Enterobacter aerogenes).